Reading from the N-terminus, the 745-residue chain is Eukaryotic translation initiation factor 3 subunit B (745 aa).

The 89-residue stretch at 41–129 (DVIVIEGVPV…HRFSVHRFTD (89 aa)) folds into the RRM domain. WD repeat units follow at residues 189–230 (EHSR…RFMR), 251–293 (WSHE…RSFP), 303–344 (GQLK…LLEK), and 580–625 (GEHY…LQKH). A coiled-coil region spans residues 644–745 (GKDEQKRVRK…IIEETEEVLA (102 aa)).

Belongs to the eIF-3 subunit B family. As to quaternary structure, component of the eukaryotic translation initiation factor 3 (eIF-3) complex.

The protein localises to the cytoplasm. Its function is as follows. RNA-binding component of the eukaryotic translation initiation factor 3 (eIF-3) complex, which is involved in protein synthesis of a specialized repertoire of mRNAs and, together with other initiation factors, stimulates binding of mRNA and methionyl-tRNAi to the 40S ribosome. The eIF-3 complex specifically targets and initiates translation of a subset of mRNAs involved in cell proliferation. This Mycosarcoma maydis (Corn smut fungus) protein is Eukaryotic translation initiation factor 3 subunit B.